The primary structure comprises 297 residues: ClpXP adapter protein SpxH (297 aa).

It belongs to the SpxH family. Interacts with Spx.

The protein localises to the cytoplasm. Functionally, adapter protein required for efficient degradation of Spx by ClpXP under non-stress conditions. Interaction with Spx stabilizes Spx and exposes the C-terminus of Spx for recognition and proteolysis by ClpXP. The chain is ClpXP adapter protein SpxH from Bacillus thuringiensis subsp. konkukian (strain 97-27).